The primary structure comprises 148 residues: Aspartate 1-decarboxylase (148 aa).

Catalysis depends on serine 25, which acts as the Schiff-base intermediate with substrate; via pyruvic acid. Position 25 is a pyruvic acid (Ser) (serine 25). Position 57 (threonine 57) interacts with substrate. Catalysis depends on tyrosine 58, which acts as the Proton donor. 73–75 (GAA) provides a ligand contact to substrate.

This sequence belongs to the PanD family. As to quaternary structure, heterooctamer of four alpha and four beta subunits. Pyruvate is required as a cofactor. In terms of processing, is synthesized initially as an inactive proenzyme, which is activated by self-cleavage at a specific serine bond to produce a beta-subunit with a hydroxyl group at its C-terminus and an alpha-subunit with a pyruvoyl group at its N-terminus.

The protein localises to the cytoplasm. The enzyme catalyses L-aspartate + H(+) = beta-alanine + CO2. It participates in cofactor biosynthesis; (R)-pantothenate biosynthesis; beta-alanine from L-aspartate: step 1/1. In terms of biological role, catalyzes the pyruvoyl-dependent decarboxylation of aspartate to produce beta-alanine. This Rhodococcus opacus (strain B4) protein is Aspartate 1-decarboxylase.